Here is a 348-residue protein sequence, read N- to C-terminus: Serpentine receptor class beta-7 (348 aa).

The next 7 helical transmembrane spans lie at 31–51, 63–83, 107–127, 145–165, 191–211, 241–261, and 280–300; these read QLIM…FQLL, LVGY…EAFI, GNLL…SITF, FLGP…ILLI, MFFI…FLLL, ISVI…TILL, and GAFM…SVYF.

The protein belongs to the nematode receptor-like protein srb family.

It localises to the membrane. This chain is Serpentine receptor class beta-7 (srb-7), found in Caenorhabditis elegans.